The chain runs to 903 residues: Centrobin (903 aa).

A compositionally biased stretch (polar residues) spans M1 to S10. The segment at M1–V34 is disordered. The residue at position 80 (S80) is a Phosphoserine. Disordered stretches follow at residues L110–S140, L471–Q493, L568–R597, S669–A704, R772–T799, and S837–R903. Residues R196–H560 adopt a coiled-coil conformation. The tract at residues Q365–R903 is required for centrosome localization. The span at L572–Q590 shows a compositional bias: pro residues. Over residues H675–P685 the composition is skewed to basic and acidic residues. The segment covering S778–P791 has biased composition (low complexity). The residue at position 790 (S790) is a Phosphoserine. The segment covering S837–I863 has biased composition (basic and acidic residues).

As to quaternary structure, interacts with LYST. In terms of tissue distribution, widely expressed (at protein level). Highly expressed in testis. Also expressed in spleen, thymus, prostate, small intestine, colon and peripheral blood leukocytes.

The protein resides in the cytoplasm. The protein localises to the cytoskeleton. It is found in the microtubule organizing center. It localises to the centrosome. Its subcellular location is the centriole. Required for centriole duplication. Inhibition of centriole duplication leading to defects in cytokinesis. In Homo sapiens (Human), this protein is Centrobin (CNTROB).